We begin with the raw amino-acid sequence, 126 residues long: Thioredoxin-like 3-3 (126 aa).

A disordered region spans residues 1–24 (MRKQESEGANLEFESKSNDNGNVK). Residues 5–126 (ESEGANLEFE…RLHDRLWLHS (122 aa)) enclose the Thioredoxin domain. Active-site nucleophile residues include C55 and C58. The cysteines at positions 55 and 58 are disulfide-linked.

It belongs to the thioredoxin family.

Its function is as follows. Probable thiol-disulfide oxidoreductase that may participate in various redox reactions. This Arabidopsis thaliana (Mouse-ear cress) protein is Thioredoxin-like 3-3.